Consider the following 364-residue polypeptide: Probable UDP-arabinopyranose mutase 1 (364 aa).

A DXD motif motif is present at residues 110–112 (DDD). Arg-158 is a glycosylation site (N-linked (Glc...) arginine).

The protein belongs to the RGP family. As to quaternary structure, homopentamer or homohexamer. The cofactor is Mn(2+). Requires Mg(2+) as cofactor. In terms of processing, reversibly glycosylated by UDP-glucose, UDP-xylose and UDP-galactose.

It is found in the secreted. It localises to the cell wall. The protein resides in the cell junction. The protein localises to the plasmodesma. Its subcellular location is the golgi apparatus. The catalysed reaction is UDP-beta-L-arabinofuranose = UDP-beta-L-arabinopyranose. Functionally, probable UDP-L-arabinose mutase involved in the biosynthesis of cell wall non-cellulosic polysaccharides. Was initially shown to possess an autoglycosylating activity which is dependent on the presence of UDP-glucose and manganese. The chain is Probable UDP-arabinopyranose mutase 1 from Zea mays (Maize).